Consider the following 102-residue polypeptide: Mini zinc finger protein 1 (102 aa).

Basic residues predominate over residues 1–13 (MMKKRQMVIKQRS). The interval 1 to 34 (MMKKRQMVIKQRSRNSNTSSSWTTTSSSSSSSEI) is disordered. Residues 14–32 (RNSNTSSSWTTTSSSSSSS) show a composition bias toward low complexity. A ZF-HD dimerization-type; degenerate zinc finger spans residues 39-88 (YVECQKNHAANIGGYAVDGCREFMAAGVEGTVDALRCAACGCHRNFHRKE).

As to quaternary structure, homo- and heterodimers. Interacts with ZHD1, ZHD5, ZHD6, ZHD7, ZHD8, ZHD10 and ZHD13. In terms of tissue distribution, mostly expressed in roots and stems, present in siliques and seedlings, and weakly observed in petioles, leaves and flowers.

It localises to the cytoplasm. Functionally, inhibits zinc finger homeodomain (ZHD) transcription factors, such as ZHD5, by interacting with them to prevent both their nuclear localization and their DNA-binding properties. Involved in integrating signals from multiple hormones by preventing the expression of genes involved in gibberellic acid (GA), auxin and brassinosteroid signaling and by promoting the expression of abscisic acid (ABA)-responsive genes. Regulates several development aspects, including photomorphogenesis, apical dominance, longevity, flower morphology and fertility, as well as root and stem elongation. Promotes the formation of ectopic shoot meristems on leaf margins. This chain is Mini zinc finger protein 1 (MIF1), found in Arabidopsis thaliana (Mouse-ear cress).